We begin with the raw amino-acid sequence, 415 residues long: Phosphoglycerate kinase (415 aa).

Substrate-binding positions include 27–29 (DVN), Arg-44, 67–70 (HQGR), Arg-124, and Arg-164. Residues Glu-336 and 362 to 365 (GGHM) each bind ATP.

The protein belongs to the phosphoglycerate kinase family. In terms of assembly, monomer.

The protein localises to the cytoplasm. The catalysed reaction is (2R)-3-phosphoglycerate + ATP = (2R)-3-phospho-glyceroyl phosphate + ADP. It participates in carbohydrate degradation; glycolysis; pyruvate from D-glyceraldehyde 3-phosphate: step 2/5. This chain is Phosphoglycerate kinase, found in Sulfolobus acidocaldarius (strain ATCC 33909 / DSM 639 / JCM 8929 / NBRC 15157 / NCIMB 11770).